Reading from the N-terminus, the 182-residue chain is Large ribosomal subunit protein uL5 (182 aa).

The protein belongs to the universal ribosomal protein uL5 family. Part of the 50S ribosomal subunit; part of the 5S rRNA/L5/L18/L25 subcomplex. Contacts the 5S rRNA and the P site tRNA. Forms a bridge to the 30S subunit in the 70S ribosome.

In terms of biological role, this is one of the proteins that bind and probably mediate the attachment of the 5S RNA into the large ribosomal subunit, where it forms part of the central protuberance. In the 70S ribosome it contacts protein S13 of the 30S subunit (bridge B1b), connecting the 2 subunits; this bridge is implicated in subunit movement. Contacts the P site tRNA; the 5S rRNA and some of its associated proteins might help stabilize positioning of ribosome-bound tRNAs. This Nostoc sp. (strain PCC 7120 / SAG 25.82 / UTEX 2576) protein is Large ribosomal subunit protein uL5.